Consider the following 250-residue polypeptide: Formylaminopyrimidine transport permease protein ThiX (250 aa).

Transmembrane regions (helical) follow at residues 5–25 (YQAL…EISA), 62–82 (IISI…LLMF), 94–114 (LLVA…VLWF), 115–135 (GYSI…PITV), 172–192 (LPSF…GAAV), and 216–236 (PGVF…FAAI). The region spanning 56–237 (LPATLAIISI…LGILGFAAIK (182 aa)) is the ABC transmembrane type-1 domain.

The protein belongs to the binding-protein-dependent transport system permease family. In terms of assembly, the complex is likely composed of an ATP-binding protein (ThiZ), a transmembrane protein (ThiX) and a solute-binding protein (ThiY).

The protein resides in the cell membrane. It participates in cofactor biosynthesis; thiamine diphosphate biosynthesis. Functionally, participates in a thiamine pyrimidine salvage pathway as part of the ABC transporter complex ThiXYZ involved in the import of thiamine degradation products such as the formylaminopyrimidine N-formyl-4-amino-5-aminomethyl-2-methylpyrimidine (FAMP). Is probably responsible for the translocation of the substrate across the membrane. This chain is Formylaminopyrimidine transport permease protein ThiX, found in Halalkalibacterium halodurans (strain ATCC BAA-125 / DSM 18197 / FERM 7344 / JCM 9153 / C-125) (Bacillus halodurans).